We begin with the raw amino-acid sequence, 254 residues long: Protein orai-2 (254 aa).

4 helical membrane passes run 66–83 (TSAL…EVQL), 94–114 (LIAF…ALLI), 148–168 (LAWG…VVLL), and 196–216 (AALV…VFTI).

The protein belongs to the Orai family. Oligomerizes in homomeric and heteromeric ORAI complexes. Native CRAC channels most likely consist of hexameric ORAI heteromers, implying that diverse ORAI1, ORAI2 and ORAI3 subunit combinations with distinct biophysical properties can operate in a cell-type specific way. Interacts with STIM1; this regulates channel activity. Interacts with CRACR2A/EFCAB4B.

The protein resides in the cell membrane. The enzyme catalyses Ca(2+)(in) = Ca(2+)(out). Its activity is regulated as follows. CRAC channels are regulated by fast Ca(2+)-dependent inactivation (FCDI), a mechanism that limits Ca(2+) influx and cell toxicity. ORAI2 channels display prominent FCDI. Inhibited by lanthanides such as Gd(3+) ions. Functionally, pore-forming subunit of inward rectifying Ca(2+) release-activated Ca(2+) (CRAC) channels. Assembles with ORAI1 and ORAI3 to form hexameric CRAC channels that mediate Ca(2+) influx upon depletion of endoplasmic reticulum Ca(2+) store and channel activation by Ca(2+) sensor STIM1, a process known as store-operated Ca(2+) entry (SOCE). Various pore subunit combinations may account for distinct CRAC channel spatiotemporal and cell-type specific dynamics. ORAI1 mainly contributes to the generation of Ca(2+) plateaus involved in sustained Ca(2+) entry and is dispensable for cytosolic Ca(2+) oscillations, whereas ORAI2 and ORAI3 generate oscillatory patterns. CRAC channels assemble in Ca(2+) signaling microdomains where Ca(2+) influx is coupled to calmodulin and calcineurin signaling and activation of NFAT transcription factors recruited to ORAI1 via AKAP5. CRAC channels are the main pathway for Ca(2+) influx in T cells and promote the immune response to pathogens by activating NFAT-dependent cytokine and chemokine transcription. The polypeptide is Protein orai-2 (ORAI2) (Homo sapiens (Human)).